We begin with the raw amino-acid sequence, 159 residues long: NADH dehydrogenase [ubiquinone] 1 beta subcomplex subunit 10 (159 aa).

It belongs to the complex I NDUFB10 subunit family. Complex I is composed of 45 different subunits.

It localises to the mitochondrion inner membrane. Its function is as follows. Accessory subunit of the mitochondrial membrane respiratory chain NADH dehydrogenase (Complex I), that is believed not to be involved in catalysis. Complex I functions in the transfer of electrons from NADH to the respiratory chain. The immediate electron acceptor for the enzyme is believed to be ubiquinone. The sequence is that of NADH dehydrogenase [ubiquinone] 1 beta subcomplex subunit 10 from Bombyx mori (Silk moth).